The primary structure comprises 109 residues: uncharacterized protein (109 aa).

This is an uncharacterized protein from Autographa californica nuclear polyhedrosis virus (AcMNPV).